Here is a 142-residue protein sequence, read N- to C-terminus: Large ribosomal subunit protein bL17 (142 aa).

It belongs to the bacterial ribosomal protein bL17 family. Part of the 50S ribosomal subunit. Contacts protein L32.

The chain is Large ribosomal subunit protein bL17 from Wolbachia pipientis wMel.